Consider the following 305-residue polypeptide: MSDFDRVRDYLTALQDRICNVVETIDGQSHFHEDHWQRTEGGGGRTRLLRDGAVFEQAAIGFSDVCGTHLPPSASVRRPELAGANWRACGVSLVFHPKNPFVPTTHLNVRYFRAEREGKQVAAWFGGGFDLTPFYPFDEDVVHWHRVARDLCAPFGDERYAAHKRWCDEYFVLRHRNETRGVGGLFFDDLDKDFERDFDYQRAVGDGFLDAYFPIVTRRHDTPYGDRERAFQLYRRGRYVEFNLLFDRGTLFGLQSGGRAESILISLPPLVRWEYGYHPLPGSAEARLADYLLPRDWLEESRICE.

Position 92 (Ser-92) interacts with substrate. Residues His-96 and His-106 each contribute to the a divalent metal cation site. His-106 serves as the catalytic Proton donor. 108-110 (NVR) is a substrate binding site. Positions 145 and 175 each coordinate a divalent metal cation. Positions 239–274 (YVEFNLLFDRGTLFGLQSGGRAESILISLPPLVRWE) are important for dimerization. 257–259 (GGR) provides a ligand contact to substrate.

Belongs to the aerobic coproporphyrinogen-III oxidase family. As to quaternary structure, homodimer. A divalent metal cation serves as cofactor.

The protein localises to the cytoplasm. The enzyme catalyses coproporphyrinogen III + O2 + 2 H(+) = protoporphyrinogen IX + 2 CO2 + 2 H2O. It participates in porphyrin-containing compound metabolism; protoporphyrin-IX biosynthesis; protoporphyrinogen-IX from coproporphyrinogen-III (O2 route): step 1/1. Involved in the heme biosynthesis. Catalyzes the aerobic oxidative decarboxylation of propionate groups of rings A and B of coproporphyrinogen-III to yield the vinyl groups in protoporphyrinogen-IX. The protein is Oxygen-dependent coproporphyrinogen-III oxidase of Xylella fastidiosa (strain M12).